We begin with the raw amino-acid sequence, 416 residues long: Protein-glutamine gamma-glutamyltransferase (416 aa).

The tat-type signal signal peptide spans 1–29; the sequence is MHKRRRLLAFATVGAVICTAGFTPSVSQA. A propeptide spanning residues 30–85 is cleaved from the precursor; that stretch reads ASSGDGEEKGSYAETHGLTADDVESINALNERALTLGQPGKPPKELPPSASAPSRA. Positions 64–103 are disordered; the sequence is TLGQPGKPPKELPPSASAPSRAPSDDRETPPAEPLDRMPE. The span at 76 to 85 shows a compositional bias: low complexity; sequence PPSASAPSRA. Residues 86-103 show a composition bias toward basic and acidic residues; it reads PSDDRETPPAEPLDRMPE. Cysteine 149 is an active-site residue. Positions 290-331 are disordered; sequence GQDQRGSSDKRKYGDPEAFRPDQGTGLVDMSKDRSIPRSPAK. A compositionally biased stretch (basic and acidic residues) spans 295–309; the sequence is GSSDKRKYGDPEAFR. Active-site residues include aspartate 340 and histidine 359.

This sequence belongs to the bacterial TGase family. Predicted to be exported by the Tat system. The position of the signal peptide cleavage has not been experimentally proven.

It carries out the reaction L-glutaminyl-[protein] + L-lysyl-[protein] = [protein]-L-lysyl-N(6)-5-L-glutamyl-[protein] + NH4(+). Functionally, catalyzes the cross-linking of proteins and the conjugation of polyamines to proteins. The protein is Protein-glutamine gamma-glutamyltransferase of Streptomyces cinnamoneus (Streptoverticillium cinnamoneum).